An 876-amino-acid polypeptide reads, in one-letter code: MSKSTAEIRQAFLDFFHSKGHQVVASSSLVPHNDPTLLFTNAGMNQFKDVFLGLDKRNYSRATTSQRCVRAGGKHNDLENVGYTARHHTFFEMLGNFSFGDYFKHDAIQFAWELLTSEKWFALPKERLWVTVYESDDEAYEIWEKEVGIPRERIIRIGDNKGAPYASDNFWQMGDTGPCGPCTEIFYDHGDHIWGGPPGSPEEDGDRYIEIWNIVFMQFNRQADGTMEPLPKPSVDTGMGLERIAAVLQHVNSNYDIDLFRTLIQAVAKVTGATDLSNKSLRVIADHIRSCAFLIADGVMPSNENRGYVLRRIIRRAVRHGNMLGAKETFFYKLVGPLIDVMGSAGEDLKRQQAQVEQVLKTEEEQFARTLERGLALLDEELAKLSGDTLDGETAFRLYDTYGFPVDLTADVCRERNIKVDEAGFEAAMEEQRRRAREASGFGADYNAMIRVDSASEFKGYDHLELNGKVTALFVDGKAVDAINAGQEAVVVLDQTPFYAESGGQVGDKGELKGANFSFAVEDTQKYGQAIGHIGKLAAGSLKVGDAVQADVDEARRARIRLNHSATHLMHAALRQVLGTHVSQKGSLVNDKVLRFDFSHNEAMKPEEIRAVEDLVNAQIRRNLPIETNIMDLEAAKAKGAMALFGEKYDERVRVLSMGDFSTELCGGTHASRTGDIGLFRIISESGTAAGVRRIEAVTGEGAIATVHADSERLSEVAHLLKGDSNNLADKVRSVLERTRQLEKELQQLKEQAAAQESANLSSKAIDVNGVKLLVSELSGVEPKMLRTMVDDLKNQLGSTIIVLATVAEGKVSLIAGVSKDVTDRVKAGELIGMVAQQVGGKGGGRPDMAQAGGTDAAALPAALASVKGWVSAKLQ.

Lys-74 carries the N6-acetyllysine modification. Zn(2+)-binding residues include His-564, His-568, Cys-666, and His-670.

Belongs to the class-II aminoacyl-tRNA synthetase family. In terms of assembly, homotetramer. Zn(2+) serves as cofactor.

The protein resides in the cytoplasm. The enzyme catalyses tRNA(Ala) + L-alanine + ATP = L-alanyl-tRNA(Ala) + AMP + diphosphate. In terms of biological role, catalyzes the attachment of alanine to tRNA(Ala) in a two-step reaction: alanine is first activated by ATP to form Ala-AMP and then transferred to the acceptor end of tRNA(Ala). Also edits incorrectly charged Ser-tRNA(Ala) and Gly-tRNA(Ala) via its editing domain. In Escherichia coli O6:K15:H31 (strain 536 / UPEC), this protein is Alanine--tRNA ligase.